A 443-amino-acid polypeptide reads, in one-letter code: Thymidine phosphorylase (443 aa).

Belongs to the thymidine/pyrimidine-nucleoside phosphorylase family. As to quaternary structure, homodimer.

It carries out the reaction thymidine + phosphate = 2-deoxy-alpha-D-ribose 1-phosphate + thymine. The protein operates within pyrimidine metabolism; dTMP biosynthesis via salvage pathway; dTMP from thymine: step 1/2. In terms of biological role, the enzymes which catalyze the reversible phosphorolysis of pyrimidine nucleosides are involved in the degradation of these compounds and in their utilization as carbon and energy sources, or in the rescue of pyrimidine bases for nucleotide synthesis. The polypeptide is Thymidine phosphorylase (Shewanella woodyi (strain ATCC 51908 / MS32)).